Reading from the N-terminus, the 316-residue chain is Long form salivary protein D7L1 (316 aa).

The signal sequence occupies residues 1–23 (MSHTRAVVLAVACLCLILVQVEG). 4 disulfide bridges follow: Cys40/Cys76, Cys72/Cys131, Cys181/Cys214, and Cys255/Cys266.

Belongs to the PBP/GOBP family.

The protein resides in the secreted. Functionally, modulates blood feeding of female mosquitoes on vertebrate species by binding and sequestering different mediators involved in the host response, such as biogenic amines and eicosanoids. Binds serotonin, tryptamine, histamine, leukotriene C4, leukotriene D4 and leukotriene E4. Does not bind octopamine, dopamine, noradrenaline, adrenaline and prostaglandin PGF2alpha. This Anopheles atroparvus (European mosquito) protein is Long form salivary protein D7L1.